The chain runs to 491 residues: Serine/threonine-protein kinase 3 (491 aa).

Position 1 is an N-acetylmethionine (Met-1). At Ser-15 the chain carries Phosphoserine; by PLK1. Positions 27–278 (FDVLEKLGEG…ATQLLQHPFI (252 aa)) constitute a Protein kinase domain. Residues 33-41 (LGEGSYGSV) and Lys-56 each bind ATP. At Thr-117 the chain carries Phosphothreonine; by PKB/AKT1. Asp-146 functions as the Proton acceptor in the catalytic mechanism. 2 residues coordinate Mg(2+): Asn-151 and Asp-164. Phosphothreonine; by autocatalysis occurs at positions 174 and 180. Residues 287–328 (LRDLITEAMEIKAKRHEEQQRELEEEEENSDEDELDSHTMVK) are a coiled coil. A disordered region spans residues 301 to 327 (RHEEQQRELEEEEENSDEDELDSHTMV). Over residues 309–321 (LEEEEENSDEDEL) the composition is skewed to acidic residues. Ser-316 carries the post-translational modification Phosphoserine. Phosphothreonine; by autocatalysis occurs at positions 336 and 378. Residues 370 to 392 (EDEEEEDGTMKRNATSPQVQRPS) form a disordered region. The span at 381–390 (RNATSPQVQR) shows a compositional bias: polar residues. At Thr-384 the chain carries Phosphothreonine; by PKB/AKT1. Ser-385 and Ser-444 each carry phosphoserine. Residues 437 to 484 (FDFLKNLSLEELQMRLKALDPMMEREIEELRQRYTAKRQPILDAMDAK) form the SARAH domain. Residues 442–475 (NLSLEELQMRLKALDPMMEREIEELRQRYTAKRQ) are a coiled coil.

It belongs to the protein kinase superfamily. STE Ser/Thr protein kinase family. STE20 subfamily. As to quaternary structure, homodimer; mediated via the coiled-coil region. Interacts with NORE1, which inhibits autoactivation. Interacts with and stabilizes SAV1. Interacts with RAF1, which prevents dimerization and phosphorylation. Interacts with RASSF1. Interacts (via SARAH domain) with isoform 1 of NEK2. Interacts with ESR1 only in the presence of SAV1. Interacts with PKB/AKT1. Forms a tripartite complex with MOBKL1B and STK38. Interacts with RASSF2 (via SARAH domain). Interacts with DLG5 (via PDZ domain 3). Interacts with LATS1; this interaction is inhibited in the presence of DLG5. Interacts with MARK3 in the presence of DLG5. Interacts with RASSF5; this interaction inhibits STK3 autoactivation through heterodimerization. Interacts (when phosphorylated) with SLMAP (via FHA domain); the interaction associates STK3 with the STRIPAK complex. Requires Mg(2+) as cofactor. In terms of processing, autophosphorylated on two residues Thr-174 and Thr-180, leading to activation. Phosphorylation at Thr-117 and Thr-384 by PKB/AKT1, leads to inhibition of its: cleavage, kinase activity, autophosphorylation at Thr-180, binding to RASSF1 and nuclear translocation, and increase in its binding to RAF1. Phosphorylated at Ser-15 by PLK1, leading to activation. When autophosphorylated at Thr-180, recruits STRIPAK complex and promotes PP2A-mediated dephosphorylation and inactivation of STK3. Post-translationally, proteolytically cleaved by caspase-3 during apoptosis. Proteolytic cleavage results in kinase activation and nuclear translocation of the truncated form (MST1/N). Ubiquitinated by TRIM69; leading to its redistribution to the perinuclear cytoskeleton, where it is phosphorylated by PLK1 and subsequently activated. Expressed at high levels in adult kidney, skeletal and placenta tissues and at very low levels in adult heart, lung and brain tissues.

It localises to the cytoplasm. It is found in the nucleus. The protein localises to the cytoskeleton. Its subcellular location is the microtubule organizing center. The protein resides in the centrosome. It catalyses the reaction L-seryl-[protein] + ATP = O-phospho-L-seryl-[protein] + ADP + H(+). The catalysed reaction is L-threonyl-[protein] + ATP = O-phospho-L-threonyl-[protein] + ADP + H(+). With respect to regulation, inhibited by the C-terminal non-catalytic region. Activated by caspase-cleavage. Full activation also requires homodimerization and autophosphorylation of Thr-180, which are inhibited by the proto-oncogene product RAF1. Activated by RASSF1 which acts by preventing its dephosphorylation. When autophosphorylated at Thr-180, recruits STRIPAK complex and promotes PP2A-mediated dephosphorylation and inactivation of STK3. Stress-activated, pro-apoptotic kinase which, following caspase-cleavage, enters the nucleus and induces chromatin condensation followed by internucleosomal DNA fragmentation. Key component of the Hippo signaling pathway which plays a pivotal role in organ size control and tumor suppression by restricting proliferation and promoting apoptosis. The core of this pathway is composed of a kinase cascade wherein STK3/MST2 and STK4/MST1, in complex with its regulatory protein SAV1, phosphorylates and activates LATS1/2 in complex with its regulatory protein MOB1, which in turn phosphorylates and inactivates YAP1 oncoprotein and WWTR1/TAZ. Phosphorylation of YAP1 by LATS2 inhibits its translocation into the nucleus to regulate cellular genes important for cell proliferation, cell death, and cell migration. STK3/MST2 and STK4/MST1 are required to repress proliferation of mature hepatocytes, to prevent activation of facultative adult liver stem cells (oval cells), and to inhibit tumor formation. Phosphorylates NKX2-1. Phosphorylates NEK2 and plays a role in centrosome disjunction by regulating the localization of NEK2 to centrosome, and its ability to phosphorylate CROCC and CEP250. In conjunction with SAV1, activates the transcriptional activity of ESR1 through the modulation of its phosphorylation. Positively regulates RAF1 activation via suppression of the inhibitory phosphorylation of RAF1 on 'Ser-259'. Phosphorylates MOBKL1A and RASSF2. Phosphorylates MOBKL1B on 'Thr-74'. Acts cooperatively with MOBKL1B to activate STK38. This is Serine/threonine-protein kinase 3 from Homo sapiens (Human).